Consider the following 943-residue polypeptide: 2-oxoglutarate dehydrogenase E1 component (943 aa).

The protein belongs to the alpha-ketoglutarate dehydrogenase family. In terms of assembly, homodimer. Part of the 2-oxoglutarate dehydrogenase (OGDH) complex composed of E1 (2-oxoglutarate dehydrogenase), E2 (dihydrolipoamide succinyltransferase) and E3 (dihydrolipoamide dehydrogenase); the complex contains multiple copies of the three enzymatic components (E1, E2 and E3). Requires thiamine diphosphate as cofactor.

The catalysed reaction is N(6)-[(R)-lipoyl]-L-lysyl-[protein] + 2-oxoglutarate + H(+) = N(6)-[(R)-S(8)-succinyldihydrolipoyl]-L-lysyl-[protein] + CO2. In terms of biological role, E1 component of the 2-oxoglutarate dehydrogenase (OGDH) complex which catalyzes the decarboxylation of 2-oxoglutarate, the first step in the conversion of 2-oxoglutarate to succinyl-CoA and CO(2). The chain is 2-oxoglutarate dehydrogenase E1 component from Shouchella clausii (strain KSM-K16) (Alkalihalobacillus clausii).